The primary structure comprises 781 residues: Probable serine/threonine-protein kinase C70.05c (781 aa).

2 disordered regions span residues 1–315 and 368–417; these read MPSD…PLVS and YSGK…TNIS. Residues 21-31 are compositionally biased toward low complexity; sequence ESPSSRSIGSG. The span at 43 to 63 shows a compositional bias: polar residues; that stretch reads FKNSFLSRKNSSQIKSPSDYK. Residues 64 to 73 show a composition bias toward basic and acidic residues; it reads SSAHEQRVNH. Polar residues predominate over residues 74-92; the sequence is TTDSMAHVPGNNSPLQTPQ. A Phosphoserine modification is found at serine 94. Residues 112–121 show a composition bias toward basic residues; sequence SRHHKPHHSG. Polar residues-rich tracts occupy residues 136 to 146, 161 to 195, and 206 to 228; these read SNANSPTSESP, KNTSSHPSSPVNGKSSDIHKSQSYQHLKNSPPNSR, and NSASHNLGSTKSPNGNAKESLSR. Phosphoserine is present on serine 253. The span at 272-304 shows a compositional bias: low complexity; sequence PLTASPTPSSPTGTPNSMSKSPSLSSLASTGAS. Over residues 379-406 the composition is skewed to polar residues; it reads NVGSSANTAPNSPTSANSSEGNQGNGPT. The Protein kinase domain maps to 432-742; it reads AKRVVPRLSA…AQEALNLPFV (311 aa). Residues 452-460 and lysine 480 contribute to the ATP site; that span reads MGSGATAVI. Aspartate 584 functions as the Proton acceptor in the catalytic mechanism.

It belongs to the protein kinase superfamily. Ser/Thr protein kinase family.

The protein resides in the cytoplasm. The catalysed reaction is L-seryl-[protein] + ATP = O-phospho-L-seryl-[protein] + ADP + H(+). It catalyses the reaction L-threonyl-[protein] + ATP = O-phospho-L-threonyl-[protein] + ADP + H(+). The chain is Probable serine/threonine-protein kinase C70.05c from Schizosaccharomyces pombe (strain 972 / ATCC 24843) (Fission yeast).